The chain runs to 362 residues: Heat-inducible transcription repressor HrcA (362 aa).

It belongs to the HrcA family.

Negative regulator of class I heat shock genes (grpE-dnaK-dnaJ and groELS operons). Prevents heat-shock induction of these operons. The sequence is that of Heat-inducible transcription repressor HrcA from Bradyrhizobium sp. (strain ORS 278).